The following is a 729-amino-acid chain: MIVHRIIPSRVKDPLTRFKPLKNLTTSSSPVFEPSSSSSSSSSSASFSVSDSFLVEKICFSLKQGNNNVRNHLIRLNPLAVVEVLYRCRNDLTLGQRFVDQLGFHFPNFKHTSLSLSAMIHILVRSGRLSDAQSCLLRMIRRSGVSRLEIVNSLDSTFSNCGSNDSVFDLLIRTYVQARKLREAHEAFTLLRSKGFTVSIDACNALIGSLVRIGWVELAWGVYQEISRSGVGINVYTLNIMVNALCKDGKMEKVGTFLSQVQEKGVYPDIVTYNTLISAYSSKGLMEEAFELMNAMPGKGFSPGVYTYNTVINGLCKHGKYERAKEVFAEMLRSGLSPDSTTYRSLLMEACKKGDVVETEKVFSDMRSRDVVPDLVCFSSMMSLFTRSGNLDKALMYFNSVKEAGLIPDNVIYTILIQGYCRKGMISVAMNLRNEMLQQGCAMDVVTYNTILHGLCKRKMLGEADKLFNEMTERALFPDSYTLTILIDGHCKLGNLQNAMELFQKMKEKRIRLDVVTYNTLLDGFGKVGDIDTAKEIWADMVSKEILPTPISYSILVNALCSKGHLAEAFRVWDEMISKNIKPTVMICNSMIKGYCRSGNASDGESFLEKMISEGFVPDCISYNTLIYGFVREENMSKAFGLVKKMEEEQGGLVPDVFTYNSILHGFCRQNQMKEAEVVLRKMIERGVNPDRSTYTCMINGFVSQDNLTEAFRIHDEMLQRGFSPDDKF.

The tract at residues 26 to 45 (TSSSPVFEPSSSSSSSSSSA) is disordered. Residues 27–45 (SSSPVFEPSSSSSSSSSSA) show a composition bias toward low complexity. PPR repeat units follow at residues 112-147 (TSLSLSAMIHILVRSGRLSDAQSCLLRMIRRSGVSR), 164-198 (NDSVFDLLIRTYVQARKLREAHEAFTLLRSKGFTV), 199-233 (SIDACNALIGSLVRIGWVELAWGVYQEISRSGVGI), 234-268 (NVYTLNIMVNALCKDGKMEKVGTFLSQVQEKGVYP), 269-303 (DIVTYNTLISAYSSKGLMEEAFELMNAMPGKGFSP), 304-338 (GVYTYNTVINGLCKHGKYERAKEVFAEMLRSGLSP), 339-373 (DSTTYRSLLMEACKKGDVVETEKVFSDMRSRDVVP), 374-408 (DLVCFSSMMSLFTRSGNLDKALMYFNSVKEAGLIP), 409-443 (DNVIYTILIQGYCRKGMISVAMNLRNEMLQQGCAM), 444-478 (DVVTYNTILHGLCKRKMLGEADKLFNEMTERALFP), 479-513 (DSYTLTILIDGHCKLGNLQNAMELFQKMKEKRIRL), 514-548 (DVVTYNTLLDGFGKVGDIDTAKEIWADMVSKEILP), 549-583 (TPISYSILVNALCSKGHLAEAFRVWDEMISKNIKP), 584-618 (TVMICNSMIKGYCRSGNASDGESFLEKMISEGFVP), 619-649 (DCISYNTLIYGFVREENMSKAFGLVKKMEEE), 656-690 (DVFTYNSILHGFCRQNQMKEAEVVLRKMIERGVNP), and 691-725 (DRSTYTCMINGFVSQDNLTEAFRIHDEMLQRGFSP).

It belongs to the PPR family. P subfamily.

This is Pentatricopeptide repeat-containing protein At5g01110 from Arabidopsis thaliana (Mouse-ear cress).